We begin with the raw amino-acid sequence, 75 residues long: Large ribosomal subunit protein bL31 (75 aa).

This sequence belongs to the bacterial ribosomal protein bL31 family. Type A subfamily. As to quaternary structure, part of the 50S ribosomal subunit.

Binds the 23S rRNA. The protein is Large ribosomal subunit protein bL31 of Chlorobium luteolum (strain DSM 273 / BCRC 81028 / 2530) (Pelodictyon luteolum).